A 540-amino-acid polypeptide reads, in one-letter code: Chaperonin GroEL (540 aa).

ATP is bound by residues 30-33 (TLGP), Lys-51, 87-91 (DGTTT), Gly-415, 479-481 (NAA), and Asp-495.

It belongs to the chaperonin (HSP60) family. Forms a cylinder of 14 subunits composed of two heptameric rings stacked back-to-back. Interacts with the co-chaperonin GroES.

Its subcellular location is the cytoplasm. The enzyme catalyses ATP + H2O + a folded polypeptide = ADP + phosphate + an unfolded polypeptide.. In terms of biological role, together with its co-chaperonin GroES, plays an essential role in assisting protein folding. The GroEL-GroES system forms a nano-cage that allows encapsulation of the non-native substrate proteins and provides a physical environment optimized to promote and accelerate protein folding. In Raoultella planticola (Klebsiella planticola), this protein is Chaperonin GroEL.